We begin with the raw amino-acid sequence, 421 residues long: Dihydroorotase (421 aa).

2 residues coordinate Zn(2+): H60 and H62. Substrate contacts are provided by residues 62–64 (HFR) and N94. Positions 151, 178, and 231 each coordinate Zn(2+). N277 provides a ligand contact to substrate. D304 contacts Zn(2+). D304 is a catalytic residue. Residue H308 coordinates substrate.

This sequence belongs to the metallo-dependent hydrolases superfamily. DHOase family. Class I DHOase subfamily. Requires Zn(2+) as cofactor.

It catalyses the reaction (S)-dihydroorotate + H2O = N-carbamoyl-L-aspartate + H(+). It functions in the pathway pyrimidine metabolism; UMP biosynthesis via de novo pathway; (S)-dihydroorotate from bicarbonate: step 3/3. Catalyzes the reversible cyclization of carbamoyl aspartate to dihydroorotate. The protein is Dihydroorotase of Clostridioides difficile (strain 630) (Peptoclostridium difficile).